The sequence spans 355 residues: Vacuolar protein sorting-associated protein 37C (355 aa).

A Phosphoserine modification is found at Ser-29. Positions 78–167 (VERCQEQKAK…RKPRASQELA (90 aa)) constitute a VPS37 C-terminal domain. The tract at residues 159–355 (KPRASQELAG…PPPGPAWPGY (197 aa)) is disordered. Pro residues-rich tracts occupy residues 170 to 186 (APPPRPPPPVRPVPQGT) and 194 to 205 (PQPPSAMPPYPL). Over residues 246–257 (PAAQPGPRGAAG) the composition is skewed to low complexity. Over residues 321–355 (PGQPQPSVPLQPPYPPGPAPPYGFPPPPGPAWPGY) the composition is skewed to pro residues.

This sequence belongs to the VPS37 family. As to quaternary structure, component of the ESCRT-I complex (endosomal sorting complex required for transport I) which consists of TSG101, VPS28, a VPS37 protein (VPS37A to -D) and MVB12A or MVB12B in a 1:1:1:1 stoichiometry. Interacts with TSG101, VPS28, MVB12A and MVB12B. Component of the ESCRT-I complex (endosomal sorting complex required for transport I) which consists of TSG101, VPS28, a VPS37 protein (VPS37A to -D) and UBAP1 in a 1:1:1:1 stoichiometry. Interacts with HGS and STAM2. Interacts with CEP55. Phosphorylated by TBK1.

The protein resides in the late endosome membrane. In terms of biological role, component of the ESCRT-I complex, a regulator of vesicular trafficking process. Required for the sorting of endocytic ubiquitinated cargos into multivesicular bodies. May be involved in cell growth and differentiation. The chain is Vacuolar protein sorting-associated protein 37C (VPS37C) from Pongo abelii (Sumatran orangutan).